Consider the following 285-residue polypeptide: ATP phosphoribosyltransferase (285 aa).

It belongs to the ATP phosphoribosyltransferase family. Long subfamily. Requires Mg(2+) as cofactor.

The protein localises to the cytoplasm. The enzyme catalyses 1-(5-phospho-beta-D-ribosyl)-ATP + diphosphate = 5-phospho-alpha-D-ribose 1-diphosphate + ATP. The protein operates within amino-acid biosynthesis; L-histidine biosynthesis; L-histidine from 5-phospho-alpha-D-ribose 1-diphosphate: step 1/9. With respect to regulation, feedback inhibited by histidine. Catalyzes the condensation of ATP and 5-phosphoribose 1-diphosphate to form N'-(5'-phosphoribosyl)-ATP (PR-ATP). Has a crucial role in the pathway because the rate of histidine biosynthesis seems to be controlled primarily by regulation of HisG enzymatic activity. This Streptomyces avermitilis (strain ATCC 31267 / DSM 46492 / JCM 5070 / NBRC 14893 / NCIMB 12804 / NRRL 8165 / MA-4680) protein is ATP phosphoribosyltransferase.